The following is a 187-amino-acid chain: Adenylate kinase (187 aa).

10–15 is a binding site for ATP; the sequence is GSGKGT. The tract at residues 30-59 is NMP; that stretch reads STGDLLRAEVAAGSPLGLKAKEVMARGDLV. Residues threonine 31, arginine 36, 57–59, 85–88, and glutamine 92 each bind AMP; these read DLV and GYPR. The tract at residues 126-136 is LID; sequence GRAKAEGREDD. Arginine 127 contributes to the ATP binding site. AMP-binding residues include arginine 133 and arginine 144. Glycine 172 contacts ATP.

This sequence belongs to the adenylate kinase family. As to quaternary structure, monomer.

The protein localises to the cytoplasm. It catalyses the reaction AMP + ATP = 2 ADP. Its pathway is purine metabolism; AMP biosynthesis via salvage pathway; AMP from ADP: step 1/1. Catalyzes the reversible transfer of the terminal phosphate group between ATP and AMP. Plays an important role in cellular energy homeostasis and in adenine nucleotide metabolism. This Xanthomonas oryzae pv. oryzae (strain MAFF 311018) protein is Adenylate kinase.